The sequence spans 88 residues: uncharacterized protein (88 aa).

2 helical membrane passes run 5–25 (AIPF…LLFV) and 36–56 (CYYL…VMIF).

Its subcellular location is the membrane. This is an uncharacterized protein from Saccharomyces cerevisiae (strain ATCC 204508 / S288c) (Baker's yeast).